Reading from the N-terminus, the 403-residue chain is Cytoplasmic tRNA 2-thiolation protein 2 (403 aa).

This sequence belongs to the CTU2/NCS2 family.

Its subcellular location is the cytoplasm. The protein operates within tRNA modification; 5-methoxycarbonylmethyl-2-thiouridine-tRNA biosynthesis. Its function is as follows. Plays a central role in 2-thiolation of mcm(5)S(2)U at tRNA wobble positions of tRNA(Lys), tRNA(Glu) and tRNA(Gln). May act by forming a heterodimer with NCS6/CTU1 that ligates sulfur from thiocarboxylated URM1 onto the uridine of tRNAs at wobble position. This chain is Cytoplasmic tRNA 2-thiolation protein 2, found in Drosophila ananassae (Fruit fly).